The primary structure comprises 572 residues: Pentatricopeptide repeat-containing protein At5g15010, mitochondrial (572 aa).

The transit peptide at 1 to 57 (MRGIFLIRSRLSIFRAPAVKCLRFSNVLPSLSNNCIVRLYMEPPVACVLPLGLCSMF) directs the protein to the mitochondrion. 10 PPR repeats span residues 160–194 (SVREYHSMISILGKMRKFDTAWTLIDEMRKFSPSL), 196–230 (NSQTLLIMIRKYCAVHDVGKAINTFHAYKRFKLEM), 231–261 (GIDDFQSLLSALCRYKNVSDAGHLIFCNKDK), 265–300 (DAKSFNIVLNGWCNVIGSPREAERVWMEMGNVGVKH), 301–335 (DVVSYSSMISCYSKGGSLNKVLKLFDRMKKECIEP), 336–371 (DRKVYNAVVHALAKASFVSEARNLMKTMEEEKGIEP), 372–406 (NVVTYNSLIKPLCKARKTEEAKQVFDEMLEKGLFP), 412–438 (HAFMRILRTGEEVFELLAKMRKMGCEP), 439–473 (TVETYIMLIRKLCRWRDFDNVLLLWDEMKEKTVGP), and 474–508 (DLSSYIVMIHGLFLNGKIEEAYGYYKEMKDKGMRP).

Belongs to the PPR family. P subfamily.

The protein resides in the mitochondrion. The protein is Pentatricopeptide repeat-containing protein At5g15010, mitochondrial of Arabidopsis thaliana (Mouse-ear cress).